We begin with the raw amino-acid sequence, 579 residues long: V-type ATP synthase alpha chain (579 aa).

ATP is bound at residue 227–234 (GGFGTGKT).

The protein belongs to the ATPase alpha/beta chains family.

It carries out the reaction ATP + H2O + 4 H(+)(in) = ADP + phosphate + 5 H(+)(out). Produces ATP from ADP in the presence of a proton gradient across the membrane. The V-type alpha chain is a catalytic subunit. The sequence is that of V-type ATP synthase alpha chain from Anaeromyxobacter dehalogenans (strain 2CP-C).